The chain runs to 128 residues: Photosystem II reaction center Psb28 protein (128 aa).

The tract at residues 109–128 (SGLGYSQDSGEAPASDSSNG) is disordered. Polar residues predominate over residues 111-128 (LGYSQDSGEAPASDSSNG).

It belongs to the Psb28 family. Part of the photosystem II complex.

Its subcellular location is the cellular thylakoid membrane. The sequence is that of Photosystem II reaction center Psb28 protein from Synechococcus sp. (strain CC9311).